The following is a 678-amino-acid chain: Protein MALE DISCOVERER 2 (678 aa).

An N-terminal signal peptide occupies residues 1–25 (MMGCGFHFPWFFFLIIGLQAPLSLS). Residues 26 to 323 (LTSQGSALLK…SKGSKHVWLY (298 aa)) lie on the Extracellular side of the membrane. An N-linked (GlcNAc...) asparagine glycan is attached at Asn52. 4 LRR repeats span residues 71–94 (KVQI…SQLS), 95–117 (DLRS…YGSF), 119–141 (NLEV…LSNG), and 143–164 (SLKH…KIVR). Residues 247 to 314 (LAAEPAPSAP…KNQPQDNKQS (68 aa)) form a disordered region. Residues 296–311 (KGSTSPDISKNQPQDN) show a composition bias toward polar residues. The chain crosses the membrane as a helical span at residues 324–344 (VVIAVASFVGLLIIVAVIFFC). Topologically, residues 345-678 (RKRAVKSIGP…ELEILSSEAT (334 aa)) are cytoplasmic. The region spanning 346 to 651 (KRAVKSIGPW…DVAEQLKQVI (306 aa)) is the Protein kinase domain.

This sequence belongs to the protein kinase superfamily. Ser/Thr protein kinase family. Expressed in pollen tubes and seedlings.

It is found in the endomembrane system. It catalyses the reaction L-seryl-[protein] + ATP = O-phospho-L-seryl-[protein] + ADP + H(+). It carries out the reaction L-threonyl-[protein] + ATP = O-phospho-L-threonyl-[protein] + ADP + H(+). Functionally, involved in the pollen tube perception of the female signal by binding an unidentified female attractant. May be involved in the regulation of root hairs development. The sequence is that of Protein MALE DISCOVERER 2 (MDIS2) from Arabidopsis thaliana (Mouse-ear cress).